The chain runs to 224 residues: Cytidylate kinase (224 aa).

Residue 11-19 coordinates ATP; it reads GPAGAGKST.

It belongs to the cytidylate kinase family. Type 1 subfamily.

Its subcellular location is the cytoplasm. The catalysed reaction is CMP + ATP = CDP + ADP. It carries out the reaction dCMP + ATP = dCDP + ADP. The polypeptide is Cytidylate kinase (Lysinibacillus sphaericus (strain C3-41)).